A 59-amino-acid polypeptide reads, in one-letter code: Large ribosomal subunit protein uL30 (59 aa).

This sequence belongs to the universal ribosomal protein uL30 family. In terms of assembly, part of the 50S ribosomal subunit.

This Mycolicibacterium vanbaalenii (strain DSM 7251 / JCM 13017 / BCRC 16820 / KCTC 9966 / NRRL B-24157 / PYR-1) (Mycobacterium vanbaalenii) protein is Large ribosomal subunit protein uL30.